The following is a 324-amino-acid chain: MKPSVILYKALPDDLLQRLQEHFTVHQVANLSPQTVEQNAAIFAEAEGLLGSNENVDAALLEKMPKLRATSTISVGYDNFDVDALTARKILLMHTPTVLTETVADTLMALVLSTARRVVEVAERVKAGEWTASIGPDWYGTDVHHKTLGIVGMGRIGMALAQRAHFGFNMPILYNARRHHKEAEERFNARYCDLDTLLQESDFVCLILPLTDETHHLFGAEQFAKMKSSAIFINAGRGPVVDENALIAALQKGEIHAAGLDVFEQEPLSVDSPLLSMANVVAVPHIGSATYETRYGMAACAVDNLIDALQGKVEKNCVNPHVAD.

Active-site residues include R237 and E266. The active-site Proton donor is H285.

This sequence belongs to the D-isomer specific 2-hydroxyacid dehydrogenase family. GhrB subfamily. In terms of assembly, homodimer.

The protein localises to the cytoplasm. The enzyme catalyses glycolate + NADP(+) = glyoxylate + NADPH + H(+). The catalysed reaction is (R)-glycerate + NAD(+) = 3-hydroxypyruvate + NADH + H(+). It carries out the reaction (R)-glycerate + NADP(+) = 3-hydroxypyruvate + NADPH + H(+). In terms of biological role, catalyzes the NADPH-dependent reduction of glyoxylate and hydroxypyruvate into glycolate and glycerate, respectively. In Escherichia coli (strain ATCC 8739 / DSM 1576 / NBRC 3972 / NCIMB 8545 / WDCM 00012 / Crooks), this protein is Glyoxylate/hydroxypyruvate reductase B.